A 138-amino-acid chain; its full sequence is MRVTQGTFSFLPDLTDEQINKQLAYIVSKGFSANVEYTDDPHPRNSYWELWGLPLFDVKDASAVMYEISSCRKAKPNYYIKVNAFDNTRGIESCVLSFIVNRPINEPGFLLQRQDFEGRTMKYSLHSYATEKPEGARY.

It belongs to the RuBisCO small chain family. In terms of assembly, heterohexadecamer of 8 large and 8 small subunits.

It localises to the plastid. Its subcellular location is the chloroplast. In terms of biological role, ruBisCO catalyzes two reactions: the carboxylation of D-ribulose 1,5-bisphosphate, the primary event in carbon dioxide fixation, as well as the oxidative fragmentation of the pentose substrate in the photorespiration process. Both reactions occur simultaneously and in competition at the same active site. Although the small subunit is not catalytic it is essential for maximal activity. This chain is Ribulose bisphosphate carboxylase small subunit, found in Pyropia haitanensis (Red seaweed).